Consider the following 206-residue polypeptide: Small ribosomal subunit protein uS4 (206 aa).

An S4 RNA-binding domain is found at 96-156 (CRLDNVVYRM…EKAKNQLRIA (61 aa)).

It belongs to the universal ribosomal protein uS4 family. In terms of assembly, part of the 30S ribosomal subunit. Contacts protein S5. The interaction surface between S4 and S5 is involved in control of translational fidelity.

In terms of biological role, one of the primary rRNA binding proteins, it binds directly to 16S rRNA where it nucleates assembly of the body of the 30S subunit. Functionally, with S5 and S12 plays an important role in translational accuracy. The chain is Small ribosomal subunit protein uS4 from Azotobacter vinelandii (strain DJ / ATCC BAA-1303).